The following is a 131-amino-acid chain: Small ribosomal subunit protein uS8 (131 aa).

It belongs to the universal ribosomal protein uS8 family. As to quaternary structure, part of the 30S ribosomal subunit. Contacts proteins S5 and S12.

In terms of biological role, one of the primary rRNA binding proteins, it binds directly to 16S rRNA central domain where it helps coordinate assembly of the platform of the 30S subunit. This Sulfurimonas denitrificans (strain ATCC 33889 / DSM 1251) (Thiomicrospira denitrificans (strain ATCC 33889 / DSM 1251)) protein is Small ribosomal subunit protein uS8.